A 316-amino-acid chain; its full sequence is Aspartate carbamoyltransferase catalytic subunit (316 aa).

Carbamoyl phosphate-binding residues include arginine 66 and threonine 67. Position 94 (lysine 94) interacts with L-aspartate. Carbamoyl phosphate-binding residues include arginine 116, histidine 146, and glutamine 149. The L-aspartate site is built by arginine 179 and arginine 234. Carbamoyl phosphate contacts are provided by glycine 275 and proline 276.

This sequence belongs to the aspartate/ornithine carbamoyltransferase superfamily. ATCase family. As to quaternary structure, heterododecamer (2C3:3R2) of six catalytic PyrB chains organized as two trimers (C3), and six regulatory PyrI chains organized as three dimers (R2).

It carries out the reaction carbamoyl phosphate + L-aspartate = N-carbamoyl-L-aspartate + phosphate + H(+). The protein operates within pyrimidine metabolism; UMP biosynthesis via de novo pathway; (S)-dihydroorotate from bicarbonate: step 2/3. In terms of biological role, catalyzes the condensation of carbamoyl phosphate and aspartate to form carbamoyl aspartate and inorganic phosphate, the committed step in the de novo pyrimidine nucleotide biosynthesis pathway. The sequence is that of Aspartate carbamoyltransferase catalytic subunit from Nitrosomonas europaea (strain ATCC 19718 / CIP 103999 / KCTC 2705 / NBRC 14298).